Reading from the N-terminus, the 122-residue chain is Autophagy-related protein 8b (122 aa).

Gly117 carries the Phosphatidylethanolamine amidated glycine lipid modification. The propeptide at 118–122 is removed in mature form; that stretch reads GSFYC.

Belongs to the ATG8 family. In terms of assembly, interacts with ATG4. Interacts with NBR1. In terms of processing, the C-terminal 5 residues are removed by ATG4 to expose Gly-117 at the C-terminus. This Gly-117 forms then a thioester bond with the 'Cys-558' of ATG7 (E1-like activating enzyme) before being transferred to the 'Cys-258' of ATG3 (the specific E2 conjugating enzyme), in order to be finally amidated with phosphatidylethanolamine. This lipid modification anchors ATG8 to autophagosomes. Constitutively expressed.

Its subcellular location is the cytoplasmic vesicle. It is found in the autophagosome membrane. The protein resides in the vacuole membrane. The protein localises to the cytoplasm. It localises to the cytoskeleton. Functionally, ubiquitin-like modifier involved in autophagosomes formation. May mediate the delivery of the autophagosomes to the vacuole via the microtubule cytoskeleton. This chain is Autophagy-related protein 8b (ATG8B), found in Arabidopsis thaliana (Mouse-ear cress).